A 441-amino-acid polypeptide reads, in one-letter code: Eukaryotic translation initiation factor 3 subunit M (441 aa).

Positions 196–365 (ESEQAYTYLL…QTFLIHRSTY (170 aa)) constitute a PCI domain. Residues 405–418 (KEEEANKADNKYDS) are compositionally biased toward basic and acidic residues. The tract at residues 405–441 (KEEEANKADNKYDSARGFQRGGQRKQPRALDDDMGLE) is disordered.

Belongs to the eIF-3 subunit M family. Component of the eukaryotic translation initiation factor 3 (eIF-3) complex.

It is found in the cytoplasm. Functionally, component of the eukaryotic translation initiation factor 3 (eIF-3) complex, which is involved in protein synthesis of a specialized repertoire of mRNAs and, together with other initiation factors, stimulates binding of mRNA and methionyl-tRNAi to the 40S ribosome. The eIF-3 complex specifically targets and initiates translation of a subset of mRNAs involved in cell proliferation. In Phaeosphaeria nodorum (strain SN15 / ATCC MYA-4574 / FGSC 10173) (Glume blotch fungus), this protein is Eukaryotic translation initiation factor 3 subunit M.